The sequence spans 293 residues: Ribosomal protein L11 methyltransferase (293 aa).

Threonine 145, glycine 166, aspartate 188, and asparagine 230 together coordinate S-adenosyl-L-methionine.

Belongs to the methyltransferase superfamily. PrmA family.

The protein resides in the cytoplasm. It carries out the reaction L-lysyl-[protein] + 3 S-adenosyl-L-methionine = N(6),N(6),N(6)-trimethyl-L-lysyl-[protein] + 3 S-adenosyl-L-homocysteine + 3 H(+). Functionally, methylates ribosomal protein L11. This chain is Ribosomal protein L11 methyltransferase, found in Actinobacillus pleuropneumoniae serotype 7 (strain AP76).